We begin with the raw amino-acid sequence, 151 residues long: Nucleoside diphosphate kinase (151 aa).

6 residues coordinate ATP: lysine 9, phenylalanine 57, arginine 86, threonine 92, arginine 103, and asparagine 113. The Pros-phosphohistidine intermediate role is filled by histidine 116.

It belongs to the NDK family. In terms of assembly, homotetramer. Mg(2+) serves as cofactor.

It is found in the cytoplasm. It catalyses the reaction a 2'-deoxyribonucleoside 5'-diphosphate + ATP = a 2'-deoxyribonucleoside 5'-triphosphate + ADP. The catalysed reaction is a ribonucleoside 5'-diphosphate + ATP = a ribonucleoside 5'-triphosphate + ADP. Major role in the synthesis of nucleoside triphosphates other than ATP. The ATP gamma phosphate is transferred to the NDP beta phosphate via a ping-pong mechanism, using a phosphorylated active-site intermediate. The polypeptide is Nucleoside diphosphate kinase (Chloroflexus aurantiacus (strain ATCC 29364 / DSM 637 / Y-400-fl)).